The primary structure comprises 619 residues: Dihydroxy-acid dehydratase (619 aa).

Aspartate 81 contacts Mg(2+). Cysteine 122 is a binding site for [2Fe-2S] cluster. Mg(2+) is bound by residues aspartate 123 and lysine 124. The residue at position 124 (lysine 124) is an N6-carboxylysine. Cysteine 195 provides a ligand contact to [2Fe-2S] cluster. Glutamate 494 lines the Mg(2+) pocket. Serine 520 functions as the Proton acceptor in the catalytic mechanism.

The protein belongs to the IlvD/Edd family. In terms of assembly, homodimer. [2Fe-2S] cluster serves as cofactor. Requires Mg(2+) as cofactor.

The catalysed reaction is (2R)-2,3-dihydroxy-3-methylbutanoate = 3-methyl-2-oxobutanoate + H2O. The enzyme catalyses (2R,3R)-2,3-dihydroxy-3-methylpentanoate = (S)-3-methyl-2-oxopentanoate + H2O. It participates in amino-acid biosynthesis; L-isoleucine biosynthesis; L-isoleucine from 2-oxobutanoate: step 3/4. Its pathway is amino-acid biosynthesis; L-valine biosynthesis; L-valine from pyruvate: step 3/4. In terms of biological role, functions in the biosynthesis of branched-chain amino acids. Catalyzes the dehydration of (2R,3R)-2,3-dihydroxy-3-methylpentanoate (2,3-dihydroxy-3-methylvalerate) into 2-oxo-3-methylpentanoate (2-oxo-3-methylvalerate) and of (2R)-2,3-dihydroxy-3-methylbutanoate (2,3-dihydroxyisovalerate) into 2-oxo-3-methylbutanoate (2-oxoisovalerate), the penultimate precursor to L-isoleucine and L-valine, respectively. The protein is Dihydroxy-acid dehydratase of Shewanella frigidimarina (strain NCIMB 400).